The following is a 526-amino-acid chain: GMP synthase [glutamine-hydrolyzing] (526 aa).

Residues 14–208 form the Glutamine amidotransferase type-1 domain; it reads SILIVDFGSQ…VHDICGLAGD (195 aa). The active-site Nucleophile is cysteine 91. Residues histidine 182 and glutamate 184 contribute to the active site. The 193-residue stretch at 209–401 folds into the GMPS ATP-PPase domain; it reads WTMAEFRQTK…LGMPDVFVDR (193 aa). 236-242 contributes to the ATP binding site; that stretch reads SGGVDSS.

As to quaternary structure, homodimer.

It carries out the reaction XMP + L-glutamine + ATP + H2O = GMP + L-glutamate + AMP + diphosphate + 2 H(+). It participates in purine metabolism; GMP biosynthesis; GMP from XMP (L-Gln route): step 1/1. Functionally, catalyzes the synthesis of GMP from XMP. The sequence is that of GMP synthase [glutamine-hydrolyzing] from Zymomonas mobilis subsp. mobilis (strain ATCC 31821 / ZM4 / CP4).